The following is a 383-amino-acid chain: Protein RecA (383 aa).

79–86 (GPESSGKT) is a binding site for ATP. Residues 347–369 (IEEDNTEEKQSSKEKETDEKADK) are disordered. A compositionally biased stretch (basic and acidic residues) spans 353–369 (EEKQSSKEKETDEKADK).

This sequence belongs to the RecA family.

The protein resides in the cytoplasm. In terms of biological role, can catalyze the hydrolysis of ATP in the presence of single-stranded DNA, the ATP-dependent uptake of single-stranded DNA by duplex DNA, and the ATP-dependent hybridization of homologous single-stranded DNAs. It interacts with LexA causing its activation and leading to its autocatalytic cleavage. This Streptococcus mutans serotype c (strain ATCC 700610 / UA159) protein is Protein RecA.